The sequence spans 228 residues: Cytochrome c oxidase subunit 2 (228 aa).

Residues 1 to 26 are Mitochondrial intermembrane-facing; sequence MATWANLGLQDSSSPLMEQLNFFHDH. Residues 27–47 traverse the membrane as a helical segment; the sequence is TLLILTMITILVGYIMGMLMF. Residues 48–60 are Mitochondrial matrix-facing; sequence NQFTNRYLLHGQT. The helical transmembrane segment at 61-81 threads the bilayer; it reads IEIIWTVLPAIILMFIALPSL. The Mitochondrial intermembrane segment spans residues 82 to 228; it reads RLLYLMDEIN…FIKWITNMTN (147 aa). Cu cation is bound by residues His161, Cys196, Glu198, Cys200, His204, and Met207. Glu198 is a binding site for Mg(2+).

Belongs to the cytochrome c oxidase subunit 2 family. Component of the cytochrome c oxidase (complex IV, CIV), a multisubunit enzyme composed of a catalytic core of 3 subunits and several supernumerary subunits. The complex exists as a monomer or a dimer and forms supercomplexes (SCs) in the inner mitochondrial membrane with ubiquinol-cytochrome c oxidoreductase (cytochrome b-c1 complex, complex III, CIII). Cu cation serves as cofactor.

It is found in the mitochondrion inner membrane. It carries out the reaction 4 Fe(II)-[cytochrome c] + O2 + 8 H(+)(in) = 4 Fe(III)-[cytochrome c] + 2 H2O + 4 H(+)(out). Its function is as follows. Component of the cytochrome c oxidase, the last enzyme in the mitochondrial electron transport chain which drives oxidative phosphorylation. The respiratory chain contains 3 multisubunit complexes succinate dehydrogenase (complex II, CII), ubiquinol-cytochrome c oxidoreductase (cytochrome b-c1 complex, complex III, CIII) and cytochrome c oxidase (complex IV, CIV), that cooperate to transfer electrons derived from NADH and succinate to molecular oxygen, creating an electrochemical gradient over the inner membrane that drives transmembrane transport and the ATP synthase. Cytochrome c oxidase is the component of the respiratory chain that catalyzes the reduction of oxygen to water. Electrons originating from reduced cytochrome c in the intermembrane space (IMS) are transferred via the dinuclear copper A center (CU(A)) of subunit 2 and heme A of subunit 1 to the active site in subunit 1, a binuclear center (BNC) formed by heme A3 and copper B (CU(B)). The BNC reduces molecular oxygen to 2 water molecules using 4 electrons from cytochrome c in the IMS and 4 protons from the mitochondrial matrix. This Anopheles quadrimaculatus (Common malaria mosquito) protein is Cytochrome c oxidase subunit 2 (COXII).